The sequence spans 427 residues: Trigger factor (427 aa).

The region spanning 163 to 248 (GDIAVIDFKG…IKSIKVKELP (86 aa)) is the PPIase FKBP-type domain.

Belongs to the FKBP-type PPIase family. Tig subfamily.

It localises to the cytoplasm. It carries out the reaction [protein]-peptidylproline (omega=180) = [protein]-peptidylproline (omega=0). In terms of biological role, involved in protein export. Acts as a chaperone by maintaining the newly synthesized protein in an open conformation. Functions as a peptidyl-prolyl cis-trans isomerase. The chain is Trigger factor from Clostridium beijerinckii (strain ATCC 51743 / NCIMB 8052) (Clostridium acetobutylicum).